The following is a 379-amino-acid chain: Alcohol dehydrogenase class-3 (379 aa).

Ser-2 is subject to N-acetylserine. Residues Cys-48, His-70, Cys-100, Cys-103, Cys-106, Cys-114, and Cys-177 each coordinate Zn(2+).

The protein belongs to the zinc-containing alcohol dehydrogenase family. Class-III subfamily. The cofactor is Zn(2+).

The enzyme catalyses a primary alcohol + NAD(+) = an aldehyde + NADH + H(+). The catalysed reaction is a secondary alcohol + NAD(+) = a ketone + NADH + H(+). It catalyses the reaction S-(hydroxymethyl)glutathione + NADP(+) = S-formylglutathione + NADPH + H(+). It carries out the reaction S-(hydroxymethyl)glutathione + NAD(+) = S-formylglutathione + NADH + H(+). The enzyme catalyses octan-1-ol + NAD(+) = octanal + NADH + H(+). Functionally, class-III ADH is remarkably ineffective in oxidizing ethanol, but it readily catalyzes the oxidation of long-chain primary alcohols and the oxidation of S-(hydroxymethyl) glutathione. This chain is Alcohol dehydrogenase class-3 (Fdh), found in Drosophila melanogaster (Fruit fly).